The sequence spans 2290 residues: Protein Ycf2 (2290 aa).

Residue 1644-1651 (GSIGTGRS) coordinates ATP.

The protein belongs to the Ycf2 family.

It localises to the plastid. The protein localises to the chloroplast stroma. Its function is as follows. Probable ATPase of unknown function. Its presence in a non-photosynthetic plant (Epifagus virginiana) and experiments in tobacco indicate that it has an essential function which is probably not related to photosynthesis. The sequence is that of Protein Ycf2 from Nasturtium officinale (Watercress).